The following is a 537-amino-acid chain: Bifunctional NAD(P)H-hydrate repair enzyme Nnr (537 aa).

The segment at 1-227 is NAD(P)H-hydrate epimerase; the sequence is MLGRPVFGLG…PPEAEVYVGP (227 aa). The YjeF N-terminal domain occupies 13–223; that stretch reads ITSVDVAVID…SIGAPPEAEV (211 aa). Positions 65–69 are NADPHX 1; for epimerase activity; it reads GNGGD. Residues asparagine 66 and aspartate 135 each contribute to the K(+) site. The interval 139-145 is NADPHX 1; for epimerase activity; the sequence is GTGLRGA. 2 residues coordinate (6S)-NADPHX: tyrosine 150 and aspartate 168. Serine 171 contributes to the K(+) binding site. One can recognise a YjeF C-terminal domain in the interval 226-508; sequence GPGDVAYRVR…EKIPEALNNP (283 aa). The interval 227–537 is ADP-dependent (S)-NAD(P)H-hydrate dehydratase; sequence PGDVAYRVRP…WQPPVGRSES (311 aa). Glycine 329 contributes to the (6S)-NADPHX binding site. Residues 381 to 387 form an NADPHX 2; for dehydratase activity region; the sequence is HQREFQI. Residues 421–425 and 440–449 each bind ADP; these read KGPID and VPAMSVGGTG. Aspartate 450 is a (6S)-NADPHX binding site.

In the N-terminal section; belongs to the NnrE/AIBP family. The protein in the C-terminal section; belongs to the NnrD/CARKD family. It depends on K(+) as a cofactor.

It catalyses the reaction (6S)-NADHX + ADP = AMP + phosphate + NADH + H(+). The enzyme catalyses (6S)-NADPHX + ADP = AMP + phosphate + NADPH + H(+). The catalysed reaction is (6R)-NADHX = (6S)-NADHX. It carries out the reaction (6R)-NADPHX = (6S)-NADPHX. Its function is as follows. Bifunctional enzyme that catalyzes the epimerization of the S- and R-forms of NAD(P)HX and the dehydration of the S-form of NAD(P)HX at the expense of ADP, which is converted to AMP. This allows the repair of both epimers of NAD(P)HX, a damaged form of NAD(P)H that is a result of enzymatic or heat-dependent hydration. The protein is Bifunctional NAD(P)H-hydrate repair enzyme Nnr (nnr) of Hyperthermus butylicus (strain DSM 5456 / JCM 9403 / PLM1-5).